The primary structure comprises 380 residues: Cystathionine beta-lyase (380 aa).

At lysine 196 the chain carries N6-(pyridoxal phosphate)lysine.

The protein belongs to the trans-sulfuration enzymes family. Requires pyridoxal 5'-phosphate as cofactor.

The protein resides in the cytoplasm. The enzyme catalyses L,L-cystathionine + H2O = L-homocysteine + pyruvate + NH4(+). It catalyses the reaction an S-substituted L-cysteine + H2O = a thiol + pyruvate + NH4(+). The protein operates within amino-acid biosynthesis; L-methionine biosynthesis via de novo pathway; L-homocysteine from L-cystathionine: step 1/1. Functionally, the enzymatic degradation of amino acids in cheese is believed to generate aroma compounds and therefore to be essential for flavor development. Cystathionine beta-lyase (CBL) can convert cystathionine to homocysteine but is also able to catalyze an alpha, gamma elimination. With methionine as a substrate, it produces volatile sulfur compounds which are important for flavor formation in Gouda cheese. The polypeptide is Cystathionine beta-lyase (metC) (Lactococcus lactis subsp. lactis (strain IL1403) (Streptococcus lactis)).